An 84-amino-acid chain; its full sequence is uncharacterized protein (84 aa).

The helical transmembrane segment at 10–32 threads the bilayer; sequence AFSLAYYIIIHLLCLSYIYEIIH.

The protein localises to the membrane. This is an uncharacterized protein from Saccharomyces cerevisiae (strain ATCC 204508 / S288c) (Baker's yeast).